A 95-amino-acid polypeptide reads, in one-letter code: Small ribosomal subunit protein uS14 (95 aa).

Belongs to the universal ribosomal protein uS14 family. In terms of assembly, part of the 30S ribosomal subunit. Contacts proteins S3 and S10.

Functionally, binds 16S rRNA, required for the assembly of 30S particles and may also be responsible for determining the conformation of the 16S rRNA at the A site. The sequence is that of Small ribosomal subunit protein uS14 (rpsN) from Carsonella ruddii.